The sequence spans 232 residues: Cytidylate kinase (232 aa).

The disordered stretch occupies residues 1–21 (MSEDTPLVVAMDGPSGTGKSS). An ATP-binding site is contributed by 13–21 (GPSGTGKSS).

It belongs to the cytidylate kinase family. Type 1 subfamily.

The protein resides in the cytoplasm. It carries out the reaction CMP + ATP = CDP + ADP. The enzyme catalyses dCMP + ATP = dCDP + ADP. The sequence is that of Cytidylate kinase from Nocardia farcinica (strain IFM 10152).